Consider the following 576-residue polypeptide: Vesicular glutamate transporter 1 (576 aa).

Residues 1–63 lie on the Cytoplasmic side of the membrane; sequence MEFRKEEFKK…CTCFGLPRRY (63 aa). Residues 64–84 form a helical membrane-spanning segment; sequence IIAIMSGLGFCISFGIRCNLG. The Vesicular portion of the chain corresponds to 85-116; the sequence is VAIVSMVNNNTVYKGNKLVIEQAQFNWDPETV. A glycan (N-linked (GlcNAc...) asparagine) is linked at asparagine 93. A helical membrane pass occupies residues 117–137; it reads GMIHGSFFWGYIVTQIPGGYI. Over 138–140 the chain is Cytoplasmic; the sequence is CQK. A helical transmembrane segment spans residues 141–161; the sequence is FAANRVFGFAIVATSTLNMLI. Topologically, residues 162–168 are vesicular; it reads PSAARVH. Residues 169–189 form a helical membrane-spanning segment; it reads FACVICVRILQGLVEGVTYPA. The Cytoplasmic segment spans residues 190-208; the sequence is CHGIWSKWAPPLERSRLAT. Residues 209 to 229 form a helical membrane-spanning segment; that stretch reads TAFCGSYAGAVVAMPLAGVLV. Residues 230 to 236 are Vesicular-facing; the sequence is QYSGWSS. A helical transmembrane segment spans residues 237 to 257; the sequence is VFYVYGSFGITWYMFWILVSY. Topologically, residues 258–297 are cytoplasmic; sequence ESPAQHPTISEEERKYIEESIGESTGFMNPMAKFKAPWRK. Residues 298–320 traverse the membrane as a helical segment; the sequence is FFTSMPVYAIIVANFCRSWTFYL. At 321 to 341 the chain is on the vesicular side; the sequence is LLISQPAYFEEVFGFAISKVG. Residues 342 to 362 traverse the membrane as a helical segment; sequence LLSALPHLVMTIIVPIGGQIA. Over 363–378 the chain is Cytoplasmic; the sequence is DFLRTKRIMSTTNVRK. The chain crosses the membrane as a helical span at residues 379-399; that stretch reads MMNCGGFGMEATLLLVVGYSH. Over 400-401 the chain is Vesicular; it reads SR. A helical membrane pass occupies residues 402–422; it reads GVAISFLVLAVGFSGFAISGF. Residues 423 to 435 lie on the Cytoplasmic side of the membrane; it reads NVNHLDIAPRYAS. A helical membrane pass occupies residues 436–456; sequence ILMGISNGVGTLSGMVCPLIV. Topologically, residues 457–469 are vesicular; the sequence is GAMTKHKTREEWQ. Residues 470–490 traverse the membrane as a helical segment; the sequence is YVFLIASLVHYGGVVFYGIFA. The Cytoplasmic segment spans residues 491-576; the sequence is SGEKQPWAEP…YGTVAERDLS (86 aa). Positions 517-552 are disordered; that stretch reads ADESEEQTQAHGGYGSYGATQTTSQQNGGWATDWEK. Polar residues predominate over residues 534–545; sequence GATQTTSQQNGG.

The protein belongs to the major facilitator superfamily. Sodium/anion cotransporter family. VGLUT subfamily.

The protein resides in the cytoplasmic vesicle. It is found in the secretory vesicle. The protein localises to the synaptic vesicle membrane. It localises to the cell membrane. Its subcellular location is the synapse. The protein resides in the synaptosome. It catalyses the reaction L-glutamate(out) = L-glutamate(in). The enzyme catalyses chloride(in) = chloride(out). It carries out the reaction 3 Na(+)(out) + phosphate(out) = 3 Na(+)(in) + phosphate(in). The catalysed reaction is phosphate(in) = phosphate(out). It catalyses the reaction K(+)(in) + H(+)(out) = K(+)(out) + H(+)(in). Chloride channel activity is allosterically activated by lumenal H(+) and Cl(-) leading to synaptic vesicles acidification. The L-glutamate transport activity is allosterically activated by lumenal H(+) and Cl(-). The allosteric activation by H(+) efficiently prevents non-vesicular efflux across the plasma membrane, thereby restricting L-glutamate transport activity to acidic membranes such as synaptic vesicles. Multifunctional transporter that transports L-glutamate as well as multiple ions such as chloride, proton, potassium, sodium and phosphate. At the synaptic vesicle membrane, mainly functions as an uniporter which transports preferentially L-glutamate but also phosphate from the cytoplasm into synaptic vesicles at presynaptic nerve terminals of excitatory neural cells. The L-glutamate or phosphate uniporter activity is electrogenic and is driven by the proton electrochemical gradient, mainly by the electrical gradient established by the vacuolar H(+)-ATPase across the synaptic vesicle membrane. In addition, functions as a chloride channel that allows a chloride permeation through the synaptic vesicle membrane that affects the proton electrochemical gradient and promotes synaptic vesicles acidification. Moreover, may function as a K(+)/H(+) antiport allowing to maintain the electrical gradient and to decrease chemical gradient and therefore sustain vesicular glutamate uptake. The vesicular K(+)/H(+) antiport activity is electroneutral. At the plasma membrane, following exocytosis, functions as a symporter of Na(+) and phosphate from the extracellular space to the cytoplasm allowing synaptic phosphate homeostasis regulation. The symporter activity is driven by an inside negative membrane potential and is electrogenic. Is necessary for synaptic signaling of visual-evoked responses from photoreceptors. The polypeptide is Vesicular glutamate transporter 1 (Xenopus laevis (African clawed frog)).